The chain runs to 198 residues: Recombination protein RecR (198 aa).

A C4-type zinc finger spans residues 57 to 72; sequence CSLCGNLDTVDPCHIC. Positions 80–175 constitute a Toprim domain; it reads GLICVVETVG…TVTRVGHGVP (96 aa).

Belongs to the RecR family.

May play a role in DNA repair. It seems to be involved in an RecBC-independent recombinational process of DNA repair. It may act with RecF and RecO. In Gluconobacter oxydans (strain 621H) (Gluconobacter suboxydans), this protein is Recombination protein RecR.